Here is a 228-residue protein sequence, read N- to C-terminus: LexA repressor (228 aa).

Positions 26-46 form a DNA-binding region, H-T-H motif; the sequence is FDEMKDALDLRSKSGIHRLIT. Residues S149 and K187 each act as for autocatalytic cleavage activity in the active site.

It belongs to the peptidase S24 family. In terms of assembly, homodimer.

The catalysed reaction is Hydrolysis of Ala-|-Gly bond in repressor LexA.. Functionally, represses a number of genes involved in the response to DNA damage (SOS response), including recA and lexA. In the presence of single-stranded DNA, RecA interacts with LexA causing an autocatalytic cleavage which disrupts the DNA-binding part of LexA, leading to derepression of the SOS regulon and eventually DNA repair. This chain is LexA repressor, found in Cereibacter sphaeroides (strain ATCC 17025 / ATH 2.4.3) (Rhodobacter sphaeroides).